The primary structure comprises 221 residues: Kynurenine formamidase (221 aa).

Phenylalanine 30 is a binding site for substrate. Zn(2+) is bound by residues histidine 60, histidine 64, and aspartate 66. Histidine 70 (proton donor/acceptor) is an active-site residue. Histidine 172 and glutamate 184 together coordinate Zn(2+).

It belongs to the Cyclase 1 superfamily. KynB family. As to quaternary structure, homodimer. Zn(2+) serves as cofactor.

It carries out the reaction N-formyl-L-kynurenine + H2O = L-kynurenine + formate + H(+). Its pathway is amino-acid degradation; L-tryptophan degradation via kynurenine pathway; L-kynurenine from L-tryptophan: step 2/2. Its function is as follows. Catalyzes the hydrolysis of N-formyl-L-kynurenine to L-kynurenine, the second step in the kynurenine pathway of tryptophan degradation. The protein is Kynurenine formamidase of Polaromonas sp. (strain JS666 / ATCC BAA-500).